A 698-amino-acid chain; its full sequence is Elongation factor G 1 (698 aa).

Positions 8 to 290 (ERYRNIGIVA…AVVDYLPAPI (283 aa)) constitute a tr-type G domain. Residues 17–24 (AHVDAGKT), 88–92 (DTPGH), and 142–145 (NKMD) each bind GTP.

The protein belongs to the TRAFAC class translation factor GTPase superfamily. Classic translation factor GTPase family. EF-G/EF-2 subfamily.

The protein localises to the cytoplasm. Functionally, catalyzes the GTP-dependent ribosomal translocation step during translation elongation. During this step, the ribosome changes from the pre-translocational (PRE) to the post-translocational (POST) state as the newly formed A-site-bound peptidyl-tRNA and P-site-bound deacylated tRNA move to the P and E sites, respectively. Catalyzes the coordinated movement of the two tRNA molecules, the mRNA and conformational changes in the ribosome. This is Elongation factor G 1 from Shewanella denitrificans (strain OS217 / ATCC BAA-1090 / DSM 15013).